Consider the following 509-residue polypeptide: Maturase K (509 aa).

Belongs to the intron maturase 2 family. MatK subfamily.

The protein resides in the plastid. It is found in the chloroplast. Usually encoded in the trnK tRNA gene intron. Probably assists in splicing its own and other chloroplast group II introns. The chain is Maturase K from Stylosanthes hamata (Caribbean stylo).